A 229-amino-acid polypeptide reads, in one-letter code: C-type lectin domain family 1 member B (229 aa).

Topologically, residues 1-33 are cytoplasmic; that stretch reads MQDEDGYITLNIKTRKPALISVGSASSSWWRVM. Tyr-7 bears the Phosphotyrosine mark. Positions 7–10 match the ITAM motif; the sequence is YITL. Residues 34–54 traverse the membrane as a helical; Signal-anchor for type II membrane protein segment; sequence ALILLILCVGMVVGLVALGIW. The Extracellular portion of the chain corresponds to 55–229; the sequence is SVMQRNYLQG…AGMTKVDQLP (175 aa). The N-linked (GlcNAc...) asparagine glycan is linked to Asn-68. Cys-102 and Cys-113 are oxidised to a cystine. The 109-residue stretch at 109–217 folds into the C-type lectin domain; it reads YGDSCYGFFR…CENKHYLMCE (109 aa). 2 N-linked (GlcNAc...) asparagine glycosylation sites follow: Asn-120 and Asn-134. Intrachain disulfides connect Cys-130–Cys-216 and Cys-195–Cys-208.

In terms of assembly, homodimer. Interacts (via cytoplasmic domain) with RACK1; promotes CLEC1B ubiquitination and proteasome-mediated degradation. Interacts (dimer) with SYK (via SH2 domains). Interacts with PDPN; the interaction is independent of CLEC1B glycosylation and activates CLEC1B. In terms of processing, glycosylated. Post-translationally, phosphorylated on tyrosine residue in response to rhodocytin binding. In terms of tissue distribution, expressed preferentially in the liver. Also expressed in immune cells of myeloid origin and on the surface of platelets.

It localises to the membrane. Its function is as follows. C-type lectin-like receptor that functions as a platelet receptor for the lymphatic endothelial marker, PDPN. After ligand activation, signals via sequential activation of SRC and SYK tyrosine kinases leading to activation of PLCG2. In terms of biological role, (Microbial infection) Acts as a receptor for the platelet-aggregating snake venom protein rhodocytin. Rhodocytin binding leads to tyrosine phosphorylation and this promotes the binding of spleen tyrosine kinase (SYK) and initiation of downstream tyrosine phosphorylation events and activation of PLCG2. Functionally, (Microbial infection) Acts as an attachment factor for Human immunodeficiency virus type 1 (HIV-1) and facilitates its capture by platelets. The chain is C-type lectin domain family 1 member B (CLEC1B) from Homo sapiens (Human).